Here is a 318-residue protein sequence, read N- to C-terminus: 1-aminocyclopropane-1-carboxylate oxidase (318 aa).

A Fe2OG dioxygenase domain is found at 151 to 251; that stretch reads PTFGTKVSNY…RMSIASFYNP (101 aa). Fe cation is bound by residues His175, Asp177, and His232.

It belongs to the iron/ascorbate-dependent oxidoreductase family. Requires Fe cation as cofactor.

It catalyses the reaction 1-aminocyclopropane-1-carboxylate + L-ascorbate + O2 = ethene + L-dehydroascorbate + hydrogen cyanide + CO2 + 2 H2O. The protein operates within alkene biosynthesis; ethylene biosynthesis via S-adenosyl-L-methionine; ethylene from S-adenosyl-L-methionine: step 2/2. The sequence is that of 1-aminocyclopropane-1-carboxylate oxidase (ACO) from Dendrobium crumenatum (Tropical pigeon orchid).